Reading from the N-terminus, the 38-residue chain is Photosystem II reaction center protein L (38 aa).

The chain crosses the membrane as a helical span at residues 17 to 37 (SLFWGLLLIFVLAVLFSSYFF).

This sequence belongs to the PsbL family. PSII is composed of 1 copy each of membrane proteins PsbA, PsbB, PsbC, PsbD, PsbE, PsbF, PsbH, PsbI, PsbJ, PsbK, PsbL, PsbM, PsbT, PsbY, PsbZ, Psb30/Ycf12, at least 3 peripheral proteins of the oxygen-evolving complex and a large number of cofactors. It forms dimeric complexes.

It is found in the plastid. Its subcellular location is the chloroplast thylakoid membrane. In terms of biological role, one of the components of the core complex of photosystem II (PSII). PSII is a light-driven water:plastoquinone oxidoreductase that uses light energy to abstract electrons from H(2)O, generating O(2) and a proton gradient subsequently used for ATP formation. It consists of a core antenna complex that captures photons, and an electron transfer chain that converts photonic excitation into a charge separation. This subunit is found at the monomer-monomer interface and is required for correct PSII assembly and/or dimerization. In Cyanidium caldarium (Red alga), this protein is Photosystem II reaction center protein L.